A 360-amino-acid chain; its full sequence is D-alanine--D-alanine ligase (360 aa).

In terms of domain architecture, ATP-grasp spans Lys149–Gln353. Lys176–Glu231 lines the ATP pocket. Positions 308, 320, and 322 each coordinate Mg(2+).

The protein belongs to the D-alanine--D-alanine ligase family. Mg(2+) serves as cofactor. Requires Mn(2+) as cofactor.

It localises to the cytoplasm. The catalysed reaction is 2 D-alanine + ATP = D-alanyl-D-alanine + ADP + phosphate + H(+). Its pathway is cell wall biogenesis; peptidoglycan biosynthesis. Functionally, cell wall formation. In Corynebacterium glutamicum (strain ATCC 13032 / DSM 20300 / JCM 1318 / BCRC 11384 / CCUG 27702 / LMG 3730 / NBRC 12168 / NCIMB 10025 / NRRL B-2784 / 534), this protein is D-alanine--D-alanine ligase.